A 159-amino-acid chain; its full sequence is SsrA-binding protein (159 aa).

Residues 134-159 form a disordered region; that stretch reads KEHDKRDTERDRDWSRDKERLMKHNA.

This sequence belongs to the SmpB family.

The protein localises to the cytoplasm. Required for rescue of stalled ribosomes mediated by trans-translation. Binds to transfer-messenger RNA (tmRNA), required for stable association of tmRNA with ribosomes. tmRNA and SmpB together mimic tRNA shape, replacing the anticodon stem-loop with SmpB. tmRNA is encoded by the ssrA gene; the 2 termini fold to resemble tRNA(Ala) and it encodes a 'tag peptide', a short internal open reading frame. During trans-translation Ala-aminoacylated tmRNA acts like a tRNA, entering the A-site of stalled ribosomes, displacing the stalled mRNA. The ribosome then switches to translate the ORF on the tmRNA; the nascent peptide is terminated with the 'tag peptide' encoded by the tmRNA and targeted for degradation. The ribosome is freed to recommence translation, which seems to be the essential function of trans-translation. The chain is SsrA-binding protein from Marinomonas sp. (strain MWYL1).